A 312-amino-acid chain; its full sequence is Isochorismatase (312 aa).

One can recognise a Carrier domain in the interval 229-302; the sequence is VFTCENIRKQ…EWQKLLTTRS (74 aa). Serine 263 is subject to O-(pantetheine 4'-phosphoryl)serine.

This sequence belongs to the isochorismatase family.

It catalyses the reaction isochorismate + H2O = (2S,3S)-2,3-dihydroxy-2,3-dihydrobenzoate + pyruvate. It functions in the pathway siderophore biosynthesis; bacillibactin biosynthesis. The polypeptide is Isochorismatase (dhbB) (Bacillus subtilis (strain 168)).